Consider the following 125-residue polypeptide: DCPWDWSSHEGHCYKVFKLRKTWEDAEKFCTEQARGGHLISLKSTEEVDFMIKLAYPILKANLVWIGLRDFWRDCHMGWRDHANLLYKAWSDEPNCSVAKTTDNQWFRRKCNISQYFVCQSRVPR.

Intrachain disulfides connect cysteine 2–cysteine 13, cysteine 30–cysteine 119, and cysteine 96–cysteine 111. The C-type lectin domain maps to 9-120 (HEGHCYKVFK…CNISQYFVCQ (112 aa)). A glycan (N-linked (GlcNAc...) asparagine) is linked at asparagine 95. Asparagine 112 is a glycosylation site (N-linked (GlcNAc...) asparagine).

This sequence belongs to the snaclec family. In terms of assembly, heterodimer; disulfide-linked. As to expression, expressed by the venom gland.

The protein localises to the secreted. In terms of biological role, interferes with one step of hemostasis (modulation of platelet aggregation, or coagulation cascade, for example). The protein is Snaclec B6 of Macrovipera lebetinus (Levantine viper).